The following is a 159-amino-acid chain: Probable cyclic pyranopterin monophosphate synthase (159 aa).

Substrate is bound by residues 74–76 (MCH) and 110–111 (ME). Residue Asp-125 is part of the active site.

This sequence belongs to the MoaC family. As to quaternary structure, homohexamer; trimer of dimers.

The catalysed reaction is (8S)-3',8-cyclo-7,8-dihydroguanosine 5'-triphosphate = cyclic pyranopterin phosphate + diphosphate. It functions in the pathway cofactor biosynthesis; molybdopterin biosynthesis. Catalyzes the conversion of (8S)-3',8-cyclo-7,8-dihydroguanosine 5'-triphosphate to cyclic pyranopterin monophosphate (cPMP). The protein is Probable cyclic pyranopterin monophosphate synthase of Methanococcoides burtonii (strain DSM 6242 / NBRC 107633 / OCM 468 / ACE-M).